The following is a 1708-amino-acid chain: MAAANAPIAMREALTLTSLGIAPQFVTFTHVTMESEKYICVRETSPQNSVVIVDMAMPAQPLRRPITADSALMNPNTRILALKAQIPGTTQDHLQIFNIEAKTKIKSHQMPEQVVFWKWITPKLLGLVTQTSVYHWSIEGDSEPAKMFDRTANLANNQIINYRCDPSEKWLVLIGIAPGAPERPQLVKGNMQLFSVDQQRSQALEAHAASFASFKVVGNENPSTLICFASKTTNAGQITSKLHVIELGAQPGKPGFSKKQADLFFPPDFQDDFPVAMQISQKYGLIYVITKLGLLFVYDLETAAAVYRNRISPDPIFLTAESSASGGFYAINRRGQVLHATVNDATIVPFVSSQLNNLELAVNLAKRANLPGAENLVVQRFQELFAQTKYKEAAELAAESPQGLLRTPDTVAKFQSVPVQAGQTPPLLQYFGTLLTRGKLNAYESLELSRLVVNQNKKNLLENWLAEDKLECSEELGDLVKTVDNDLALKIYIKARATPKVVAAFAERREFDKILIYSKQVGYTPDYLFLLQTILRTDPQGAVNFALMMSQMEGGCPVDYNTITDLFLQRNMIREATAFLLDVLKPNLPEHAFLQTKVLEINLVTYPNVADAILANGMFSHYDRPRVAQLCEKAGLYLRALQHYTELPDIKRVMVNTHAIEPQALVEFFGTLSREWALECMKDLLLVNLRGNLQIVVQAAKEYSEQLGVDACIKLFEQFKSYEGLYFFLGAYLSSSEDPDIHFKYIEAAARTGQIKEVERVTRESNFYDAEKTKNFLMEAKLPDARPLINVCDRFGFVPDLTHYLYTNNMLRYIEGYVQKVNPGNAPLVVGQLLDDECPEDFIKGLILSVRSLLPVEPLVDECEKRNRLRLLTQFLEHLVSEGSQDVHVHNALGKIIIDSNNNPEHFLTTNPFYDSRVVGKYCEKRDPTLAVVAYRRGQCDDELINVTNKNSLFKLQARYVVERMDGDLWDKVLQPENEYRRQLIDQVVSTALPESKSPEQVSAAVKAFMTADLPHELIELLEKIVLQNSAFSGNFNLQNLLILTAIKADPSRVMDYVNRLDNFDGPAVGEVAVEAQLFEEAFAIFKKFNLNVQAVNVLLDNIRSIERAEEFAFRVEEDAVWSQVAKAQLREGLVSEAIESFIRADDATHFLDVIRAAEEANVYDDLVKYLLMVRQKAREPKVDGELIFAYAKIDRLSDIEEFILMPNVANLQNVGDRLYDEELYEAAKIIYAFISNWAKLAVTLVKLKQFQGAVDAARKANSAKTWKEVCFACVDAEEFRLAQICGLNIIVQVDDLEEVSEYYQNRGCFNELISLMESGLGLERAHMGIFTELGVLYARYRPEKLMEHIKLFSTRLNIPKLIRACDEQQHWKELTYLYIQYDEFDNAATTIMNHSPDAWDHMQFKDVAVKVANVELYYKAVHFYLQEHPDLINDLLNVLALRLDHTRVVDIMRKAGQLHLVKPYMVAVQSNNVSAVNESLNELYVEEEDYERLRESVDMHDNFDQIGLAQKLEKHELLEMRRIAAYIYKKAGRWKQSIALSKKDNMYKDCMETCSQSGDRELSEDLLVYFIEQGKKECFASCLFICYDLIRADVALELAWMNNMVDFAFPYLLQFIREYTSKVDELVKDRIESQNEVRAKEKEEKDLVAQQNMYAQLLPLALPAPPGMGGPPPPMGMPGMPPMGGMGMPPMGPGPMPAYGMPPMGSY.

A globular terminal domain region spans residues 1 to 492; the sequence is MAAANAPIAM…VDNDLALKIY (492 aa). 7 WD40-like repeat regions span residues 25–67, 68–113, 114–155, 156–205, 206–270, 271–314, and 315–343; these read FVTF…RPIT, ADSA…MPEQ, VVFW…ANLA, NNQI…QALE, AHAA…PDFQ, DDFP…ISPD, and PIFLTAESSASGGFYAINRRGQVLHATVN. Positions 462–478 are binding site for the uncoating ATPase, involved in lattice disassembly; that stretch reads ENWLAEDKLECSEELGD. The segment at 493–536 is flexible linker; that stretch reads IKARATPKVVAAFAERREFDKILIYSKQVGYTPDYLFLLQTILR. The distal segment stretch occupies residues 537-648; the sequence is TDPQGAVNFA…RALQHYTELP (112 aa). A heavy chain arm region spans residues 537–1708; that stretch reads TDPQGAVNFA…AYGMPPMGSY (1172 aa). CHCR repeat units follow at residues 551-697, 700-842, 847-986, 993-1138, 1142-1283, 1288-1434, and 1437-1580; these read QMEG…QIVV, AKEY…PEDF, ILSV…QLID, LPES…VSEA, FIRA…FRLA, LNII…DLIN, and LNVL…KECF. The proximal segment stretch occupies residues 653–1708; sequence VMVNTHAIEP…AYGMPPMGSY (1056 aa). The involved in binding clathrin light chain stretch occupies residues 1227–1536; the sequence is AAKIIYAFIS…YIYKKAGRWK (310 aa). The tract at residues 1564-1708 is trimerization; sequence SEDLLVYFIE…AYGMPPMGSY (145 aa).

The protein belongs to the clathrin heavy chain family. Clathrin triskelions, composed of 3 heavy chains and 3 light chains, are the basic subunits of the clathrin coat.

The protein resides in the cytoplasmic vesicle membrane. Its subcellular location is the membrane. It is found in the coated pit. Its function is as follows. Clathrin is the major protein of the polyhedral coat of coated pits and vesicles. The sequence is that of Clathrin heavy chain 2 from Oryza sativa subsp. japonica (Rice).